Reading from the N-terminus, the 146-residue chain is Protein disulfide-isomerase 5-1 (146 aa).

The signal sequence occupies residues 1 to 25; that stretch reads MTLGARLVAPMIILLLFIPIELVKA. A Thioredoxin domain is found at 26–133; the sequence is EVITLTPETF…LKAFVVEETE (108 aa). Residues C55 and C58 each act as nucleophile in the active site. C55 and C58 are disulfide-bonded.

Belongs to the protein disulfide isomerase family.

In terms of biological role, acts as a protein-folding catalyst that interacts with nascent polypeptides to catalyze the formation, isomerization, and reduction or oxidation of disulfide bonds. In Arabidopsis thaliana (Mouse-ear cress), this protein is Protein disulfide-isomerase 5-1 (PDIL5-1).